The primary structure comprises 337 residues: Heme A synthase (337 aa).

5 helical membrane passes run 6 to 26 (ITKW…IGGI), 87 to 107 (FIHR…LIYF), 119 to 139 (LPYI…WYMV), 154 to 174 (LAFH…QLIK), and 192 to 212 (LIFS…GALV). H256 serves as a coordination point for heme. A run of 3 helical transmembrane segments spans residues 258–278 (LGGY…LKIE), 285–305 (IAYF…ITLL), and 308–328 (VPII…SIII). H316 contributes to the heme binding site.

It belongs to the COX15/CtaA family. Type 2 subfamily. As to quaternary structure, interacts with CtaB. Heme b serves as cofactor.

It localises to the cell membrane. The enzyme catalyses Fe(II)-heme o + 2 A + H2O = Fe(II)-heme a + 2 AH2. Its pathway is porphyrin-containing compound metabolism; heme A biosynthesis; heme A from heme O: step 1/1. In terms of biological role, catalyzes the conversion of heme O to heme A by two successive hydroxylations of the methyl group at C8. The first hydroxylation forms heme I, the second hydroxylation results in an unstable dihydroxymethyl group, which spontaneously dehydrates, resulting in the formyl group of heme A. The chain is Heme A synthase from Rickettsia massiliae (strain Mtu5).